A 646-amino-acid polypeptide reads, in one-letter code: Cell surface glycoprotein MUC18 (646 aa).

The N-terminal stretch at 1–23 is a signal peptide; that stretch reads MGLPRLVCAFLLAACCCCPRVAG. 2 consecutive Ig-like V-type domains span residues 24–129 and 139–242; these read VPGE…YRIQ and PNIQ…REVT. The Extracellular segment spans residues 24-559; it reads VPGEAEQPAP…RKLPEPESRG (536 aa). Intrachain disulfides connect C48–C116, C161–C223, C272–C320, and C365–C407. The N-linked (GlcNAc...) asparagine glycan is linked to N56. 3 consecutive Ig-like C2-type domains span residues 244–330, 335–424, and 430–510; these read PVFY…TMIS, PQEL…QLVN, and PPWM…KNTS. The segment at 278 to 299 is disordered; sequence PPPHFSISKQNPSTREAEEETT. N418, N449, N467, N508, N518, N527, and N544 each carry an N-linked (GlcNAc...) asparagine glycan. A disulfide bridge links C452 with C499. The disordered stretch occupies residues 525-554; the sequence is DSNTTTGLSTSTASPHTRANSTSTERKLPE. The span at 533–547 shows a compositional bias: polar residues; it reads STSTASPHTRANSTS. Residues 560 to 583 traverse the membrane as a helical segment; that stretch reads VVIVAVIVCILVLAVLGAVLYFLY. The Cytoplasmic portion of the chain corresponds to 584-646; the sequence is KKGKLPCRRS…QGEKYIDLRH (63 aa). 3 positions are modified to phosphoserine: S606, S614, and S628. The disordered stretch occupies residues 620–646; sequence EMGLLQGSSGDKRAPGDQGEKYIDLRH. Positions 629–646 are enriched in basic and acidic residues; the sequence is GDKRAPGDQGEKYIDLRH.

In terms of tissue distribution, detected in endothelial cells in vascular tissue throughout the body. May appear at the surface of neural crest cells during their embryonic migration. Appears to be limited to vascular smooth muscle in normal adult tissues. Associated with tumor progression and the development of metastasis in human malignant melanoma. Expressed most strongly on metastatic lesions and advanced primary tumors and is only rarely detected in benign melanocytic nevi and thin primary melanomas with a low probability of metastasis.

It localises to the membrane. Plays a role in cell adhesion, and in cohesion of the endothelial monolayer at intercellular junctions in vascular tissue. Its expression may allow melanoma cells to interact with cellular elements of the vascular system, thereby enhancing hematogeneous tumor spread. Could be an adhesion molecule active in neural crest cells during embryonic development. Acts as a surface receptor that triggers tyrosine phosphorylation of FYN and PTK2/FAK1, and a transient increase in the intracellular calcium concentration. The polypeptide is Cell surface glycoprotein MUC18 (MCAM) (Homo sapiens (Human)).